A 119-amino-acid chain; its full sequence is Holo-[acyl-carrier-protein] synthase (119 aa).

Residues aspartate 8 and glutamate 58 each contribute to the Mg(2+) site.

It belongs to the P-Pant transferase superfamily. AcpS family. Mg(2+) is required as a cofactor.

The protein resides in the cytoplasm. It catalyses the reaction apo-[ACP] + CoA = holo-[ACP] + adenosine 3',5'-bisphosphate + H(+). Transfers the 4'-phosphopantetheine moiety from coenzyme A to a Ser of acyl-carrier-protein. This Limosilactobacillus fermentum (strain NBRC 3956 / LMG 18251) (Lactobacillus fermentum) protein is Holo-[acyl-carrier-protein] synthase.